The following is a 158-amino-acid chain: 2-C-methyl-D-erythritol 2,4-cyclodiphosphate synthase (158 aa).

A divalent metal cation contacts are provided by Asp-9 and His-11. 4-CDP-2-C-methyl-D-erythritol 2-phosphate is bound by residues 9–11 (DVH) and 35–36 (HS). His-43 serves as a coordination point for a divalent metal cation. 4-CDP-2-C-methyl-D-erythritol 2-phosphate contacts are provided by residues 57–59 (DIG), 62–66 (FPDTD), 101–107 (AQKPKMA), 133–136 (TTTE), Phe-140, and Arg-143.

This sequence belongs to the IspF family. As to quaternary structure, homotrimer. The cofactor is a divalent metal cation.

It carries out the reaction 4-CDP-2-C-methyl-D-erythritol 2-phosphate = 2-C-methyl-D-erythritol 2,4-cyclic diphosphate + CMP. It participates in isoprenoid biosynthesis; isopentenyl diphosphate biosynthesis via DXP pathway; isopentenyl diphosphate from 1-deoxy-D-xylulose 5-phosphate: step 4/6. Its function is as follows. Involved in the biosynthesis of isopentenyl diphosphate (IPP) and dimethylallyl diphosphate (DMAPP), two major building blocks of isoprenoid compounds. Catalyzes the conversion of 4-diphosphocytidyl-2-C-methyl-D-erythritol 2-phosphate (CDP-ME2P) to 2-C-methyl-D-erythritol 2,4-cyclodiphosphate (ME-CPP) with a corresponding release of cytidine 5-monophosphate (CMP). The polypeptide is 2-C-methyl-D-erythritol 2,4-cyclodiphosphate synthase (Bacillus cereus (strain B4264)).